Here is a 357-residue protein sequence, read N- to C-terminus: MSDSKNLNQERQKALDSAISQIEKAFGRGAIMKLKQGAIEKIDSISTGSIALDTALGIGGFPKGRIVEIFGPESSGKTTLALHVIAESQKKGGNCAFIDAEHALDIMYARKLGVNTGDLIVSQPDTGEQALHIVEYLVCSGAIDVIVVDSVAALTPRAEIEGDMGDQHMGLQARLLSHALRKLTSIVSKANCVLIFINQIRMKIGVVYGNPETTTGGNALKFYSSVRLDIRKVSAIKDKDVIIGNQTKVKVVKNKVAPPFKQVDFDIMYNEGISKVGEIIDMGVKLNIIEKAGSYYSYNSVRLGQGKENAKSYLKANCDTAHEIEQKIRSILASDNEVSCFNAEVNDNLHEVEETVF.

71–78 (GPESSGKT) serves as a coordination point for ATP.

Belongs to the RecA family.

It localises to the cytoplasm. Functionally, can catalyze the hydrolysis of ATP in the presence of single-stranded DNA, the ATP-dependent uptake of single-stranded DNA by duplex DNA, and the ATP-dependent hybridization of homologous single-stranded DNAs. It interacts with LexA causing its activation and leading to its autocatalytic cleavage. The chain is Protein RecA from Ehrlichia chaffeensis (strain ATCC CRL-10679 / Arkansas).